The primary structure comprises 271 residues: Thiamine thiazole synthase (271 aa).

NAD(+) is bound by residues serine 39, 58–59, glycine 66, valine 130, and 158–160; these read ER and HVD. Aspartate 160 and histidine 175 together coordinate Fe cation. Methionine 225 lines the NAD(+) pocket. Arginine 235 is a glycine binding site.

It belongs to the THI4 family. In terms of assembly, homooctamer; tetramer of dimers. Fe(2+) serves as cofactor.

The enzyme catalyses hydrogen sulfide + glycine + NAD(+) = ADP-5-ethyl-4-methylthiazole-2-carboxylate + nicotinamide + 3 H2O + H(+). It participates in cofactor biosynthesis; thiamine diphosphate biosynthesis. Its function is as follows. Involved in the biosynthesis of the thiazole moiety of thiamine. Catalyzes the conversion of NAD and glycine to adenosine diphosphate 5-(2-hydroxyethyl)-4-methylthiazole-2-carboxylate (ADT), an adenylated thiazole intermediate, using free sulfide as a source of sulfur. This chain is Thiamine thiazole synthase, found in Metallosphaera sedula (strain ATCC 51363 / DSM 5348 / JCM 9185 / NBRC 15509 / TH2).